Here is a 477-residue protein sequence, read N- to C-terminus: Proline--tRNA ligase (477 aa).

This sequence belongs to the class-II aminoacyl-tRNA synthetase family. ProS type 3 subfamily. Homodimer.

It localises to the cytoplasm. The catalysed reaction is tRNA(Pro) + L-proline + ATP = L-prolyl-tRNA(Pro) + AMP + diphosphate. Catalyzes the attachment of proline to tRNA(Pro) in a two-step reaction: proline is first activated by ATP to form Pro-AMP and then transferred to the acceptor end of tRNA(Pro). This is Proline--tRNA ligase from Lachnoclostridium phytofermentans (strain ATCC 700394 / DSM 18823 / ISDg) (Clostridium phytofermentans).